We begin with the raw amino-acid sequence, 762 residues long: MDFNKLYVLAQNNLFTDITIILKDESNEITLNLHKNIIYSSCIFFEKLLTSFKEKESSKIILNVPNAIIVNDIIWDFYGQKIKSHNYPEWKYFIESYKCFDYFGMNTDKKKLYKLIVEPDGFDELMDFIDLIGYDENAIEVIFNNLPDDYDLSKFSHELLTEMLSMYKKNLVQIITRNEIIVLNDFFDGTIRSTEHCINSPEVILFCASNASKIVTFDGHNIRILESNNSILLSDDSTVSDAGTILHISHSQNKNVLVILYEYRIDVWDVLINKLIASFRVPFIKKLSCSYDGSQLVYVDNNNNMIVKNILSEEIISEINLQNLPEISNNFCIPELILETNTQDLSEIPNNLYTLELKSEPDQSIDFIKSNFQHNLDNLDDLNNLDNSDDLDNSNDLNDSNDLDDSDDSNDYNNLNYDLNNLEIICSSNNEIFENVSTHYCIDVNDCNHIDNINSLNLQSPIQDLSDSLSPIDYIDSSNLQSPVQDLSDSQSSTDWIVSPNTQSPVYYLSKLDGSINGEKLSDALSIENDSISDNSDNLNNSDNSDDLDNPDNSDNLDNSDYLLEYLVNTDKTNYMFNLTYSIHTDKTNKRFNLENPYEQFNFINKFCLLYINNKVIYFIDIIDKKIIHKETCRRNIVNMRCSPTGDSIAIIDSEYIVYIYKLVTDSNGFLCYPIVDYCILVRDLFLPTKIEYSSNGRYLVFDDDGLSINLYDIEQLEMTNEFELFCDSKIIVDITFSENYCDELINRLNNALKKIEQKYPN.

One can recognise a BTB domain in the interval 16–86; it reads TDITIILKDE…FYGQKIKSHN (71 aa). Residues 390-410 show a composition bias toward acidic residues; it reads DLDNSNDLNDSNDLDDSDDSN. Disordered regions lie at residues 390–411 and 532–556; these read DLDN…DSND and ISDN…NSDN. Positions 532 to 543 are enriched in low complexity; the sequence is ISDNSDNLNNSD. Positions 737–762 form a coiled coil; it reads FSENYCDELINRLNNALKKIEQKYPN.

It belongs to the mimivirus BTB/WD family.

This is Putative BTB/POZ domain-containing protein L272 from Acanthamoeba polyphaga (Amoeba).